A 257-amino-acid polypeptide reads, in one-letter code: uncharacterized protein (257 aa).

The first 22 residues, 1 to 22, serve as a signal peptide directing secretion; sequence MGYLKRFALYISVMILIFAIAG. Cys23 carries N-palmitoyl cysteine lipidation. Cys23 carries S-diacylglycerol cysteine lipidation.

Belongs to the staphylococcal tandem lipoprotein family.

The protein localises to the cell membrane. This is an uncharacterized protein from Staphylococcus aureus (strain USA300).